Consider the following 102-residue polypeptide: NADH-quinone oxidoreductase subunit K 1 (102 aa).

Transmembrane regions (helical) follow at residues 5 to 25, 31 to 51, and 65 to 85; these read LSHYLTVSAILFTLGVFGIFL, IVILMSVELILLSVNINMVAF, and LFILTVAAAEAAIGLAILVVF.

It belongs to the complex I subunit 4L family. As to quaternary structure, NDH-1 is composed of 14 different subunits. Subunits NuoA, H, J, K, L, M, N constitute the membrane sector of the complex.

It is found in the cell inner membrane. The catalysed reaction is a quinone + NADH + 5 H(+)(in) = a quinol + NAD(+) + 4 H(+)(out). Its function is as follows. NDH-1 shuttles electrons from NADH, via FMN and iron-sulfur (Fe-S) centers, to quinones in the respiratory chain. The immediate electron acceptor for the enzyme in this species is believed to be ubiquinone. Couples the redox reaction to proton translocation (for every two electrons transferred, four hydrogen ions are translocated across the cytoplasmic membrane), and thus conserves the redox energy in a proton gradient. The chain is NADH-quinone oxidoreductase subunit K 1 from Rhizobium etli (strain CIAT 652).